We begin with the raw amino-acid sequence, 815 residues long: DNA topoisomerase 1 (815 aa).

In terms of domain architecture, Toprim spans 3–119 (KHLLIVESPA…QRIVFTEITP (117 aa)). Residues E9 and D82 each coordinate Mg(2+). Positions 133–573 (ASDLVDAQQA…KFWVPFKELV (441 aa)) constitute a Topo IA-type catalytic domain. The interaction with DNA stretch occupies residues 167–172 (SAGRVQ). The active-site O-(5'-phospho-DNA)-tyrosine intermediate is Y308. The segment at 760 to 815 (GKPARKNFSTKKTATKNETRKQTTKKRTTDAKATKKVSDKPVKKQIKKRIAPNITE) is disordered. Residues 774–801 (TKNETRKQTTKKRTTDAKATKKVSDKPV) are compositionally biased toward basic and acidic residues.

This sequence belongs to the type IA topoisomerase family. Monomer. The cofactor is Mg(2+).

It catalyses the reaction ATP-independent breakage of single-stranded DNA, followed by passage and rejoining.. Its function is as follows. Releases the supercoiling and torsional tension of DNA, which is introduced during the DNA replication and transcription, by transiently cleaving and rejoining one strand of the DNA duplex. Introduces a single-strand break via transesterification at a target site in duplex DNA. The scissile phosphodiester is attacked by the catalytic tyrosine of the enzyme, resulting in the formation of a DNA-(5'-phosphotyrosyl)-enzyme intermediate and the expulsion of a 3'-OH DNA strand. The free DNA strand then undergoes passage around the unbroken strand, thus removing DNA supercoils. Finally, in the religation step, the DNA 3'-OH attacks the covalent intermediate to expel the active-site tyrosine and restore the DNA phosphodiester backbone. The protein is DNA topoisomerase 1 of Xylella fastidiosa (strain 9a5c).